We begin with the raw amino-acid sequence, 339 residues long: Anthranilate phosphoribosyltransferase (339 aa).

5-phospho-alpha-D-ribose 1-diphosphate-binding positions include Gly-81, 84–85 (GD), Ser-89, 91–94 (NVSS), 109–117 (KHGNRALSS), and Ala-121. Position 81 (Gly-81) interacts with anthranilate. Ser-93 provides a ligand contact to Mg(2+). Asn-112 contacts anthranilate. Arg-167 lines the anthranilate pocket. Mg(2+) contacts are provided by Asp-225 and Glu-226.

It belongs to the anthranilate phosphoribosyltransferase family. Homodimer. It depends on Mg(2+) as a cofactor.

The enzyme catalyses N-(5-phospho-beta-D-ribosyl)anthranilate + diphosphate = 5-phospho-alpha-D-ribose 1-diphosphate + anthranilate. The protein operates within amino-acid biosynthesis; L-tryptophan biosynthesis; L-tryptophan from chorismate: step 2/5. Its function is as follows. Catalyzes the transfer of the phosphoribosyl group of 5-phosphorylribose-1-pyrophosphate (PRPP) to anthranilate to yield N-(5'-phosphoribosyl)-anthranilate (PRA). The chain is Anthranilate phosphoribosyltransferase from Brucella suis (strain ATCC 23445 / NCTC 10510).